Here is a 233-residue protein sequence, read N- to C-terminus: Uridylate kinase (233 aa).

7–10 (KISG) serves as a coordination point for ATP. Gly-49 serves as a coordination point for UMP. 2 residues coordinate ATP: Gly-50 and Arg-54. Residues Asp-68 and 129 to 136 (TGNPFFTT) each bind UMP. Thr-156, Tyr-162, and Asp-165 together coordinate ATP.

The protein belongs to the UMP kinase family. Homohexamer.

The protein localises to the cytoplasm. The enzyme catalyses UMP + ATP = UDP + ADP. It participates in pyrimidine metabolism; CTP biosynthesis via de novo pathway; UDP from UMP (UMPK route): step 1/1. With respect to regulation, inhibited by UTP. Functionally, catalyzes the reversible phosphorylation of UMP to UDP. This is Uridylate kinase from Neorickettsia sennetsu (strain ATCC VR-367 / Miyayama) (Ehrlichia sennetsu).